An 867-amino-acid polypeptide reads, in one-letter code: Elongation factor 2 (867 aa).

The tr-type G domain maps to 17-368; that stretch reads HNIRNLSVVA…MIVLHLPSPV (352 aa). Residue 26–33 participates in GTP binding; that stretch reads AHVDHGKS. Phosphothreonine occurs at positions 57 and 59. Residues 176–179 and 231–233 each bind GTP; these read NKLD and SGL. Position 723 is a diphthamide (His723).

It belongs to the TRAFAC class translation factor GTPase superfamily. Classic translation factor GTPase family. EF-G/EF-2 subfamily. In terms of processing, phosphorylation by EF-2 kinase completely inactivates EF-2.

It is found in the cytoplasm. It catalyses the reaction GTP + H2O = GDP + phosphate + H(+). In terms of biological role, catalyzes the GTP-dependent ribosomal translocation step during translation elongation. During this step, the ribosome changes from the pre-translocational (PRE) to the post-translocational (POST) state as the newly formed A-site-bound peptidyl-tRNA and P-site-bound deacylated tRNA move to the P and E sites, respectively. Catalyzes the coordinated movement of the two tRNA molecules, the mRNA and conformational changes in the ribosome. This chain is Elongation factor 2, found in Blastocystis hominis.